Here is a 579-residue protein sequence, read N- to C-terminus: Glycine--tRNA ligase (579 aa).

Glutamate 175 provides a ligand contact to glycine. ATP is bound by residues 207-209 and 218-219; these read RNE and RV. Glutamate 226 contacts glycine. 327 to 328 provides a ligand contact to ATP; it reads EC. 442–444 serves as a coordination point for glycine; that stretch reads EPS. Residue arginine 449 coordinates ATP.

It belongs to the class-II aminoacyl-tRNA synthetase family. As to quaternary structure, homodimer.

The catalysed reaction is tRNA(Gly) + glycine + ATP = glycyl-tRNA(Gly) + AMP + diphosphate. It catalyses the reaction 2 ATP + H(+) = P(1),P(4)-bis(5'-adenosyl) tetraphosphate + diphosphate. Its function is as follows. Catalyzes the ATP-dependent ligation of glycine to the 3'-end of its cognate tRNA, via the formation of an aminoacyl-adenylate intermediate (Gly-AMP). Also produces diadenosine tetraphosphate (Ap4A), a universal pleiotropic signaling molecule needed for cell regulation pathways, by direct condensation of 2 ATPs. Thereby, may play a special role in Ap4A homeostasis. This chain is Glycine--tRNA ligase, found in Encephalitozoon cuniculi (strain GB-M1) (Microsporidian parasite).